The following is a 254-amino-acid chain: Decaprenylphosphoryl-2-keto-beta-D-erythro-pentose reductase (254 aa).

Asp67 lines the NAD(+) pocket. The Proton acceptor role is filled by Tyr160. Lys164 contributes to the NAD(+) binding site.

Belongs to the short-chain dehydrogenases/reductases (SDR) family. As to quaternary structure, interacts with DprE1 to form an epimerase complex.

The protein resides in the periplasm. The enzyme catalyses trans,octa-cis-decaprenylphospho-beta-D-arabinofuranose + NAD(+) = trans,octa-cis-decaprenylphospho-beta-D-erythro-pentofuranosid-2-ulose + NADH + H(+). It participates in cell wall biogenesis; cell wall polysaccharide biosynthesis. In terms of biological role, component of the DprE1-DprE2 complex that catalyzes the 2-step epimerization of decaprenyl-phospho-ribose (DPR) to decaprenyl-phospho-arabinose (DPA), a key precursor that serves as the arabinose donor required for the synthesis of cell-wall arabinans. DprE1 catalyzes the first step of epimerization, namely FAD-dependent oxidation of the C2' hydroxyl of DPR to yield the keto intermediate decaprenyl-phospho-2'-keto-D-arabinose (DPX). The intermediate DPX is then transferred to DprE2 subunit of the epimerase complex, most probably through a 'substrate channel' at the interface of DprE1-DprE2 complex. DprE2 then catalyzes the second step of epimerization, the NAD(+)-dependent reduction of DPX that leads to the formation of DPA. In Mycobacterium bovis (strain ATCC BAA-935 / AF2122/97), this protein is Decaprenylphosphoryl-2-keto-beta-D-erythro-pentose reductase.